We begin with the raw amino-acid sequence, 310 residues long: Ornithine carbamoyltransferase (310 aa).

Carbamoyl phosphate is bound by residues Ser-58–Thr-61, Gln-85, Arg-109, and His-136–Gln-139. L-ornithine contacts are provided by residues Asn-167, Asp-227, and Ser-231–Met-232. Carbamoyl phosphate-binding positions include Cys-266–Leu-267 and Arg-294.

This sequence belongs to the aspartate/ornithine carbamoyltransferase superfamily. OTCase family.

The protein localises to the cytoplasm. It catalyses the reaction carbamoyl phosphate + L-ornithine = L-citrulline + phosphate + H(+). It functions in the pathway amino-acid biosynthesis; L-arginine biosynthesis; L-arginine from L-ornithine and carbamoyl phosphate: step 1/3. Its function is as follows. Reversibly catalyzes the transfer of the carbamoyl group from carbamoyl phosphate (CP) to the N(epsilon) atom of ornithine (ORN) to produce L-citrulline. The protein is Ornithine carbamoyltransferase of Rhodopseudomonas palustris (strain ATCC BAA-98 / CGA009).